Reading from the N-terminus, the 518-residue chain is Protein translocase subunit SecD (518 aa).

Transmembrane regions (helical) follow at residues 9–29, 356–376, 377–397, 406–426, 451–473, and 486–506; these read IVLS…NFIQ, GKKA…LSYG, VIGL…LALL, LPGI…NVLI, AFAT…YIFG, and IGII…IDIW.

Belongs to the SecD/SecF family. SecD subfamily. In terms of assembly, forms a complex with SecF. Part of the essential Sec protein translocation apparatus which comprises SecA, SecYEG and auxiliary proteins SecDF-YajC and YidC.

It localises to the cell inner membrane. Part of the Sec protein translocase complex. Interacts with the SecYEG preprotein conducting channel. SecDF uses the proton motive force (PMF) to complete protein translocation after the ATP-dependent function of SecA. The chain is Protein translocase subunit SecD from Rickettsia typhi (strain ATCC VR-144 / Wilmington).